The sequence spans 456 residues: ATP-dependent protease ATPase subunit HslU (456 aa).

ATP contacts are provided by residues V18, 60 to 65 (GVGKTE), D269, E334, and R406.

It belongs to the ClpX chaperone family. HslU subfamily. In terms of assembly, a double ring-shaped homohexamer of HslV is capped on each side by a ring-shaped HslU homohexamer. The assembly of the HslU/HslV complex is dependent on binding of ATP.

It localises to the cytoplasm. Its function is as follows. ATPase subunit of a proteasome-like degradation complex; this subunit has chaperone activity. The binding of ATP and its subsequent hydrolysis by HslU are essential for unfolding of protein substrates subsequently hydrolyzed by HslV. HslU recognizes the N-terminal part of its protein substrates and unfolds these before they are guided to HslV for hydrolysis. This chain is ATP-dependent protease ATPase subunit HslU, found in Desulfosudis oleivorans (strain DSM 6200 / JCM 39069 / Hxd3) (Desulfococcus oleovorans).